The following is a 397-amino-acid chain: Transcription factor TGAL6 (397 aa).

The bZIP domain occupies 104–148 (PDKVLRRLAQNREAARKSRLRKKAYIQQLETSRLKLAQLEQELQR). The segment at 106-126 (KVLRRLAQNREAARKSRLRKK) is basic motif. Residues 132–146 (LETSRLKLAQLEQEL) are leucine-zipper. In terms of domain architecture, DOG1 spans 175 to 390 (ALGFEIKYSH…RALSSLWAAR (216 aa)).

It belongs to the bZIP family.

Its subcellular location is the nucleus. Its function is as follows. Transcriptional regulator involved in defense response. The sequence is that of Transcription factor TGAL6 from Oryza sativa subsp. japonica (Rice).